A 214-amino-acid polypeptide reads, in one-letter code: Large ribosomal subunit protein uL1 (214 aa).

It belongs to the universal ribosomal protein uL1 family. In terms of assembly, part of the 50S ribosomal subunit.

Its function is as follows. Binds directly to 23S rRNA. Probably involved in E site tRNA release. In terms of biological role, protein L1 is also a translational repressor protein, it controls the translation of its operon by binding to its mRNA. This is Large ribosomal subunit protein uL1 from Methanoregula boonei (strain DSM 21154 / JCM 14090 / 6A8).